The primary structure comprises 349 residues: Alcohol dehydrogenase 1 (349 aa).

Residues Cys-46, His-69, Cys-100, Cys-103, Cys-106, Cys-114, and Cys-156 each coordinate Zn(2+). NAD(+) contacts are provided by residues 180–186 (GAGGGLG), Asp-204, Lys-208, 270–272 (VGL), and Arg-342.

Belongs to the zinc-containing alcohol dehydrogenase family. Homotetramer. Zn(2+) serves as cofactor.

The catalysed reaction is a primary alcohol + NAD(+) = an aldehyde + NADH + H(+). It catalyses the reaction a secondary alcohol + NAD(+) = a ketone + NADH + H(+). This Caenorhabditis elegans protein is Alcohol dehydrogenase 1.